A 179-amino-acid polypeptide reads, in one-letter code: Adenine phosphoribosyltransferase (179 aa).

This sequence belongs to the purine/pyrimidine phosphoribosyltransferase family. In terms of assembly, homodimer.

The protein localises to the cytoplasm. The enzyme catalyses AMP + diphosphate = 5-phospho-alpha-D-ribose 1-diphosphate + adenine. It functions in the pathway purine metabolism; AMP biosynthesis via salvage pathway; AMP from adenine: step 1/1. In terms of biological role, catalyzes a salvage reaction resulting in the formation of AMP, that is energically less costly than de novo synthesis. This is Adenine phosphoribosyltransferase from Helicobacter pylori (strain G27).